The sequence spans 140 residues: 3-hydroxyacyl-[acyl-carrier-protein] dehydratase FabZ (140 aa).

The active site involves His-47.

This sequence belongs to the thioester dehydratase family. FabZ subfamily.

The protein localises to the cytoplasm. It catalyses the reaction a (3R)-hydroxyacyl-[ACP] = a (2E)-enoyl-[ACP] + H2O. In terms of biological role, involved in unsaturated fatty acids biosynthesis. Catalyzes the dehydration of short chain beta-hydroxyacyl-ACPs and long chain saturated and unsaturated beta-hydroxyacyl-ACPs. The sequence is that of 3-hydroxyacyl-[acyl-carrier-protein] dehydratase FabZ from Streptococcus pneumoniae serotype 2 (strain D39 / NCTC 7466).